The chain runs to 607 residues: CRISPR-associated DNA-binding protein Cas12m (607 aa).

Positions 1–16 are wedge domain (WED-N); it reads MTRVTVQTAGVHYKWQ. Positions 17–189 are recognition domain (REC); the sequence is MPDQLTQQLR…QLRHHRWDGT (173 aa). Residues 50–124 are roof in REC; sequence WSSYPAVAAL…IASVRDEATE (75 aa). Positions 74–83 are enriched in basic and acidic residues; the sequence is ASTVKEEKSR. A disordered region spans residues 74–94; it reads ASTVKEEKSRQRTKRPSHPAV. Residues 190-315 form a wedge domain (WED-C) region; sequence GTISVQLQRQ…KIPDQGEVDE (126 aa). Residues 316 to 559 form a ruvC-I region; sequence GPTIAVHLGW…TVSHTGLSRV (244 aa). Positions 391-452 are ruvC insertion; sequence SIRDTLVAWL…EGADIAETLE (62 aa). Residues 552 to 588 are target nucleic-acid binding (TNB); that stretch reads SHTGLSRVHAACGHENPADDRYLMQPVLCDGCGRTYD. The Zn(2+) site is built by His-560, Cys-563, Cys-580, and Cys-583. A ruvC-II region spans residues 589-607; that stretch reads TDLSATILMLQRASAATSN. Residue Asp-590 coordinates Mg(2+).

It belongs to the CRISPR-associated DNA-binding protein Cas12m family. In terms of assembly, binds crRNA and target dsDNA as a monomer. It depends on Mg(2+) as a cofactor. Requires Zn(2+) as cofactor.

CRISPR (clustered regularly interspaced short palindromic repeat), is an adaptive immune system that provides protection against mobile genetic elements (viruses, transposable elements and conjugative plasmids). CRISPR clusters contain sequences complementary to antecedent mobile elements and target invading nucleic acids. CRISPR clusters are transcribed and processed into CRISPR RNA (crRNA). Recognizes a short motif in the CRISPR repeat sequences (the 5' PAM or protospacer adjacent motif, 5'-TTN-3' in this organism) to help distinguish self versus nonself, as targets within the bacterial CRISPR locus do not have PAMs. Upon expression in E.coli as a CRISPR locus inhibits plasmid propagation when targeted to regions essential for plasmid propagation (replication origin and a selectable marker); inhibits expression of a non-selectable marker, probably at the transcriptional level. Protects E.coli against bacteriophage M13mp18, to a lesser extent against lambda and VpaE1 as well as phage T4 with hydroxymethyl or unmodified (but not glycosylated) cytosines. Preferentially binds to its associated crRNA. Cas12m-crRNA binds DNA in a PAM-dependent, crRNA-guided fashion. Binds a 20-bp crRNA-ss-target DNA heteroduplex, in a 52 nucleotide crRNA. No dsDNA, ssDNA or RNA nuclease activity is seen for the crRNA-Cas12m complex. Probably required for pre-crRNA processing to mature crRNA. This is CRISPR-associated DNA-binding protein Cas12m from Gordonia otitidis (strain DSM 44809 / CCUG 52243 / JCM 12355 / NBRC 100426 / IFM 10032).